Consider the following 343-residue polypeptide: Probable 3',5'-cyclic-nucleotide phosphodiesterase (343 aa).

The N-terminal stretch at 1-36 (MKYLSIKSASDKIKSGLLKTGVILSFSLFSSLSTAA) is a signal peptide.

Belongs to the cyclic nucleotide phosphodiesterase class-II family.

The protein resides in the periplasm. The catalysed reaction is a nucleoside 3',5'-cyclic phosphate + H2O = a nucleoside 5'-phosphate + H(+). This chain is Probable 3',5'-cyclic-nucleotide phosphodiesterase (cpdP), found in Yersinia pestis.